A 214-amino-acid chain; its full sequence is Large ribosomal subunit protein uL16 (214 aa).

A Citrulline modification is found at Arg-32. Residue Lys-175 forms a Glycyl lysine isopeptide (Lys-Gly) (interchain with G-Cter in SUMO2) linkage. Lys-188 participates in a covalent cross-link: Glycyl lysine isopeptide (Lys-Gly) (interchain with G-Cter in ubiquitin).

Belongs to the universal ribosomal protein uL16 family. In terms of assembly, component of the large ribosomal subunit. Mature ribosomes consist of a small (40S) and a large (60S) subunit. The 40S subunit contains about 33 different proteins and 1 molecule of RNA (18S). The 60S subunit contains about 49 different proteins and 3 molecules of RNA (28S, 5.8S and 5S). In terms of processing, citrullinated by PADI4. Ufmylated by UFL1.

Its subcellular location is the cytoplasm. Its function is as follows. Component of the large ribosomal subunit. Plays a role in the formation of actively translating ribosomes. May play a role in the embryonic brain development. The sequence is that of Large ribosomal subunit protein uL16 from Rattus norvegicus (Rat).